The primary structure comprises 249 residues: Aliphatic sulfonates import ATP-binding protein SsuB 2 (249 aa).

The ABC transporter domain maps to 5 to 233 (LDLLEIRKAY…PRDRRAVELA (229 aa)). Residue 37-44 (GPSGCGKS) coordinates ATP.

It belongs to the ABC transporter superfamily. Aliphatic sulfonates importer (TC 3.A.1.17.2) family. As to quaternary structure, the complex is composed of two ATP-binding proteins (SsuB), two transmembrane proteins (SsuC) and a solute-binding protein (SsuA).

The protein resides in the cell inner membrane. The enzyme catalyses ATP + H2O + aliphatic sulfonate-[sulfonate-binding protein]Side 1 = ADP + phosphate + aliphatic sulfonateSide 2 + [sulfonate-binding protein]Side 1.. Part of the ABC transporter complex SsuABC involved in aliphatic sulfonates import. Responsible for energy coupling to the transport system. The protein is Aliphatic sulfonates import ATP-binding protein SsuB 2 of Pseudomonas aeruginosa (strain ATCC 15692 / DSM 22644 / CIP 104116 / JCM 14847 / LMG 12228 / 1C / PRS 101 / PAO1).